The primary structure comprises 529 residues: MCTPDENDYKTSTDPDTSANTNHTLEKKKRKKRKNTNVACVNCSRLHVSCEAKRPCLRCISKGLTATCVDAPRKKSKYLAGIPNRELPMNIQPDLPPRKIMIPIYNNSSNSSLNVNNMGEQQKFTSPQHIVHKAKFLSNAADSEYSILSNIIYQDTLSNKIPIDILYSNTNSTSNSTIGNSSNNSPTGTNTSPEETEMEKIRQLYSEQRANIPPHPYPSSNQNVYSILLGPNSAKIVASQVNLFANHFPLVPVDSADNSLNFKRLLPRDPSEKSSQINWDSSINQYYLNSETVTFPELAIPLKRRKNHLVSVSLESCSPDAANIKSNVEWEHSLRYSTPMEIYTSINAPFSHTPGFHHLLVYLKHRFNQQDLVKMCRSIAEFRPIFIACSVTLTEEDMIFMEQCYQRTLLEYVKFIAQIGTPTCIWRRNGQISYVNEEFEILCGWTREELLNKMTFIVEIMDDESVRDYFKTLSKVAYRDFRGSEKMKVCRLLSPIKGKIIHCCCMWTLKRDVSGLPLMILGNFMPILN.

The disordered stretch occupies residues 1–31 (MCTPDENDYKTSTDPDTSANTNHTLEKKKRK). A compositionally biased stretch (polar residues) spans 14 to 23 (DPDTSANTNH). A DNA-binding region (zn(2)-C6 fungal-type) is located at residues 40–68 (CVNCSRLHVSCEAKRPCLRCISKGLTATC). The span at 174-193 (SNSTIGNSSNNSPTGTNTSP) shows a compositional bias: low complexity. The interval 174–198 (SNSTIGNSSNNSPTGTNTSPEETEM) is disordered. The region spanning 408–480 (TLLEYVKFIA…KTLSKVAYRD (73 aa)) is the PAS domain.

This sequence belongs to the ERT1/acuK family.

It is found in the cytoplasm. It localises to the nucleus. Its function is as follows. Transcription factor which regulates nonfermentable carbon utilization. Activator of gluconeogenetic genes like PCK1. Involved in restriction of Ty1 transposition. In Saccharomyces cerevisiae (strain ATCC 204508 / S288c) (Baker's yeast), this protein is Transcription activator of gluconeogenesis ERT1 (ERT1).